We begin with the raw amino-acid sequence, 428 residues long: E3 ubiquitin-protein ligase RNF128 (428 aa).

Residues Met-1–Gly-38 form the signal peptide. N-linked (GlcNAc...) asparagine glycosylation is found at Asn-48, Asn-59, and Asn-101. The PA domain maps to Ser-75–Ile-183. Residues Ile-208–Phe-228 traverse the membrane as a helical segment. Residues Cys-277–Lys-318 form an RING-type; atypical zinc finger. Polar residues predominate over residues Val-342 to Ser-351. The disordered stretch occupies residues Val-342 to Ser-428.

In terms of processing, auto-ubiquitinated. Controls the development of T-cell clonal anergy by ubiquitination. Expressed in brain, kidney, heart, liver, ovary, testis and thymus. Expression increased as early as 4 hours by 5- to 7-fold in anergized cultures as compared to resting or activated cells.

It is found in the cytoplasm. The protein localises to the endomembrane system. Its subcellular location is the cytoskeleton. It localises to the perinuclear region. It carries out the reaction S-ubiquitinyl-[E2 ubiquitin-conjugating enzyme]-L-cysteine + [acceptor protein]-L-lysine = [E2 ubiquitin-conjugating enzyme]-L-cysteine + N(6)-ubiquitinyl-[acceptor protein]-L-lysine.. The protein operates within protein modification; protein ubiquitination. In terms of biological role, E3 ubiquitin-protein ligase that catalyzes 'Lys-27', 'Lys-48'- or 'Lys-63'-linked polyubiquitin chains formation and plays a role in different biological processes such as modulation of immune response, cytoskeletal dynamics or protein homeostasis. Inhibits IL2 and IL4 transcription, thereby playing an important role in the induction of the anergic phenotype, a long-term stable state of T-lymphocyte unresponsiveness to antigenic stimulation associated with the blockade of interleukin production. Ubiquitinates ARPC5 with 'Lys-48' linkages and COR1A with 'Lys-63' linkages leading to their degradation, down-regulation of these cytoskeletal components results in impaired lamellipodium formation and reduced accumulation of F-actin at the immunological synapse. Functions in the patterning of the dorsal ectoderm; sensitizes ectoderm to respond to neural-inducing signals. Plays a positive role in innate immune response by promoting 'Lys-63'-linked ubiquitination of TBK1 after RNA- or DNA-virus infection. Regulates alveolar macrophage activation and neutrophil infiltration by interacting with TLR4, targeting it for degradation, and inhibiting NF-kappa-B activation, hence decreasing pro-inflammatory cytokines. Negatively regulates the IL-3/STAT5 signaling pathway by facilitating 'Lys-27'-linked polyubiquitination of IL3RA leading to its degradation via lysosomal pathway. Directly regulates the N-glycosylation process in the endoplasmic reticulum by targeting the glycosyl-transferase RPN1 for ubiquitination and degradation. Other substrates targeted for degradation by RNF128 include transmembrane proteins CD40L, CD83 or the tetraspanin CD151. This chain is E3 ubiquitin-protein ligase RNF128 (Rnf128), found in Mus musculus (Mouse).